A 187-amino-acid chain; its full sequence is Oligoribonuclease (187 aa).

Positions 7-170 (LCWLDMEMTG…DDILESIEEM (164 aa)) constitute an Exonuclease domain. Tyrosine 128 is an active-site residue.

This sequence belongs to the oligoribonuclease family.

The protein resides in the cytoplasm. In terms of biological role, 3'-to-5' exoribonuclease specific for small oligoribonucleotides. The chain is Oligoribonuclease from Neisseria meningitidis serogroup C / serotype 2a (strain ATCC 700532 / DSM 15464 / FAM18).